Reading from the N-terminus, the 382-residue chain is Threonine synthase (382 aa).

Lys-93 is subject to N6-(pyridoxal phosphate)lysine. Residues Asn-119, 219 to 223, and Thr-347 contribute to the pyridoxal 5'-phosphate site; that span reads GNAGN.

This sequence belongs to the threonine synthase family. It depends on pyridoxal 5'-phosphate as a cofactor.

It carries out the reaction O-phospho-L-homoserine + H2O = L-threonine + phosphate. It participates in amino-acid biosynthesis; L-threonine biosynthesis; L-threonine from L-aspartate: step 5/5. Functionally, catalyzes the gamma-elimination of phosphate from L-phosphohomoserine and the beta-addition of water to produce L-threonine. The sequence is that of Threonine synthase (thrC) from Synechocystis sp. (strain ATCC 27184 / PCC 6803 / Kazusa).